Consider the following 115-residue polypeptide: U3-lycotoxin-Ls1r (115 aa).

A signal peptide spans 1 to 20 (MKFVLLFGVLLVTLFSYSSA). Residues 21 to 44 (EMLDDFHQADEDELVSLIKKEEAR) constitute a propeptide that is removed on maturation. 4 cysteine pairs are disulfide-bonded: Cys48–Cys63, Cys55–Cys72, Cys62–Cys87, and Cys74–Cys85.

This sequence belongs to the neurotoxin 19 (CSTX) family. 01 subfamily. As to expression, expressed by the venom gland.

It is found in the secreted. The chain is U3-lycotoxin-Ls1r from Lycosa singoriensis (Wolf spider).